A 597-amino-acid polypeptide reads, in one-letter code: Kelch-like protein 21 (597 aa).

Residues 35-103 (LDVTLEAAGG…SYTGRVAVSG (69 aa)) form the BTB domain. The region spanning 138 to 239 (CLDMQDFAEA…RRFYLLAHVE (102 aa)) is the BACK domain. Kelch repeat units follow at residues 287–335 (ILVL…ALGN), 336–382 (DIYV…VLDG), 384–422 (LYVV…ACRG), 423–470 (RLYA…TLNG), 472–512 (MYFV…VLGG), and 513–560 (KLYV…SIFR). The disordered stretch occupies residues 570-597 (GRGFELNSGSNDVDAGYHRLPQNPEELH).

Component of the BCR(KLHL21) E3 ubiquitin ligase complex, at least composed of CUL3, KLHL21 and RBX1.

The protein resides in the cytoplasm. Its subcellular location is the cytoskeleton. It localises to the spindle. It functions in the pathway protein modification; protein ubiquitination. Its function is as follows. Substrate-specific adapter of a BCR (BTB-CUL3-RBX1) E3 ubiquitin-protein ligase complex required for efficient chromosome alignment and cytokinesis. The BCR(KLHL21) E3 ubiquitin ligase complex regulates localization of the chromosomal passenger complex (CPC) from chromosomes to the spindle midzone in anaphase and mediates the ubiquitination of AURKB. Ubiquitination of AURKB by BCR(KLHL21) E3 ubiquitin ligase complex may not lead to its degradation by the proteasome. The chain is Kelch-like protein 21 (Klhl21) from Mus musculus (Mouse).